A 124-amino-acid polypeptide reads, in one-letter code: Putative C(50) carotenoid beta-cyclase subunit A (124 aa).

Helical transmembrane passes span 1–21 (MIGL…LVID), 34–54 (AAAL…VLGV), and 78–98 (FEEV…AAGV).

It belongs to the lycopene beta-cyclase family. May form a complex with LbtBC.

The protein resides in the cell membrane. The protein operates within carotenoid biosynthesis. Its function is as follows. Involved in the biosynthesis of C(50) beta-cyclic carotenoids. May have C(50) carotenoid beta-cyclase activity and produce the C(50) beta-cyclic carotenoid C.p.450 from the C(50) carotenoid dihydrobisanhydrobacterioruberin (DH-BABR). The sequence is that of Putative C(50) carotenoid beta-cyclase subunit A from Dietzia sp. (strain CQ4).